A 323-amino-acid chain; its full sequence is MTVNLDPDKVWIDGCFDFTHHGHAGAILQARRTVSKENGKLFCGVHTDEDIQHNKGTPVMNSSERYEHTRSNRWCSEVVEAAPYVTDPNWMDKYQCQYVVHGDDITIDANGEDCYKLVKEMGRFKVVKRTYGVSTTEIIHRILTKKSLPPTHPDYYPTTQELSFYSVAQDAVSKHCYVFQRDLDNVLVNGGYKFDAEDCVYVDGDFDLFHMGDIDQLRKLKMDLHPDKKLIVGITTSDYSSTIMTMKERVLSVLSCKYVDAVIIDADATSMSQYNCEKYHIGTAVLTAAGKFSEYLTKELIVKRVESQREVYIARNQKKGMSI.

The protein belongs to the cytidylyltransferase family.

The protein localises to the cytoplasm. It localises to the nucleus. The enzyme catalyses phosphoethanolamine + CTP + H(+) = CDP-ethanolamine + diphosphate. It functions in the pathway phospholipid metabolism; phosphatidylethanolamine biosynthesis; phosphatidylethanolamine from ethanolamine: step 2/3. Ethanolamine-phosphate cytidylyltransferase which catalyzes the second step of phosphatidylethanolamine biosynthesis. Involved in the maintenance of plasma membrane and required for proper sporulation. The polypeptide is Ethanolamine-phosphate cytidylyltransferase (Saccharomyces cerevisiae (strain ATCC 204508 / S288c) (Baker's yeast)).